The primary structure comprises 510 residues: Propionyl-CoA carboxylase beta chain (510 aa).

Positions 1-257 constitute a CoA carboxyltransferase N-terminal domain; the sequence is MKDILEQLED…NNREKPPVRP (257 aa). A carboxyltransferase region spans residues 1–504; the sequence is MKDILEQLED…NKSVQMPWKK (504 aa). In terms of domain architecture, CoA carboxyltransferase C-terminal spans 261–504; that stretch reads DPDRIEPSLD…NKSVQMPWKK (244 aa). Residues 292 to 325 are acyl-CoA binding; the sequence is DEGDFYEIQEEFAKNIITGFIRLEGRTVGVVANQ.

Belongs to the AccD/PCCB family. As to quaternary structure, the holoenzyme is a dodecamer composed of 6 PccA/alpha subunits and 6 PccB/beta subunits.

The enzyme catalyses propanoyl-CoA + hydrogencarbonate + ATP = (S)-methylmalonyl-CoA + ADP + phosphate + H(+). It functions in the pathway metabolic intermediate metabolism; propanoyl-CoA degradation; succinyl-CoA from propanoyl-CoA: step 1/3. Functionally, this is one of the 2 subunits of the biotin-dependent propionyl-CoA carboxylase (PCC), the enzyme catalyzing the carboxylation of propionyl-CoA/propanoyl-CoA to D-methylmalonyl-CoA/(S)-methylmalonyl-CoA. Within the holoenzyme, the alpha subunit catalyzes the ATP-dependent carboxylation of the biotin carried by the biotin carboxyl carrier (BCC) domain, while the beta subunit then tranfers the carboxyl group from carboxylated biotin to propionyl-CoA. The sequence is that of Propionyl-CoA carboxylase beta chain from Roseobacter denitrificans (strain ATCC 33942 / OCh 114) (Erythrobacter sp. (strain OCh 114)).